The chain runs to 366 residues: Alanine racemase (366 aa).

Lysine 35 serves as the catalytic Proton acceptor; specific for D-alanine. Position 35 is an N6-(pyridoxal phosphate)lysine (lysine 35). Substrate is bound at residue arginine 130. Tyrosine 254 functions as the Proton acceptor; specific for L-alanine in the catalytic mechanism. Methionine 302 lines the substrate pocket.

This sequence belongs to the alanine racemase family. Pyridoxal 5'-phosphate serves as cofactor.

It catalyses the reaction L-alanine = D-alanine. It participates in amino-acid biosynthesis; D-alanine biosynthesis; D-alanine from L-alanine: step 1/1. Catalyzes the interconversion of L-alanine and D-alanine. May also act on other amino acids. The protein is Alanine racemase (alr) of Variovorax paradoxus (strain S110).